Consider the following 269-residue polypeptide: Polyamine aminopropyltransferase (269 aa).

The PABS domain maps to 1-226 (MVWFFEYYDG…ALWSFIIGGE (226 aa)). Gln28 is an S-methyl-5'-thioadenosine binding site. Positions 59 and 83 each coordinate spermidine. S-methyl-5'-thioadenosine contacts are provided by residues Asp102 and 133-134 (DG). The Proton acceptor role is filled by Asp150. 150–153 (DSTD) is a binding site for spermidine.

It belongs to the spermidine/spermine synthase family. Homodimer or homotetramer.

Its subcellular location is the cytoplasm. It catalyses the reaction S-adenosyl 3-(methylsulfanyl)propylamine + putrescine = S-methyl-5'-thioadenosine + spermidine + H(+). The protein operates within amine and polyamine biosynthesis; spermidine biosynthesis; spermidine from putrescine: step 1/1. In terms of biological role, catalyzes the irreversible transfer of a propylamine group from the amino donor S-adenosylmethioninamine (decarboxy-AdoMet) to putrescine (1,4-diaminobutane) to yield spermidine. The chain is Polyamine aminopropyltransferase from Archaeoglobus fulgidus (strain ATCC 49558 / DSM 4304 / JCM 9628 / NBRC 100126 / VC-16).